Here is a 450-residue protein sequence, read N- to C-terminus: Phosphoglucosamine mutase (450 aa).

The Phosphoserine intermediate role is filled by Ser101. Positions 101, 242, 244, and 246 each coordinate Mg(2+). Ser101 carries the phosphoserine modification.

The protein belongs to the phosphohexose mutase family. It depends on Mg(2+) as a cofactor. Post-translationally, activated by phosphorylation.

The enzyme catalyses alpha-D-glucosamine 1-phosphate = D-glucosamine 6-phosphate. Functionally, catalyzes the conversion of glucosamine-6-phosphate to glucosamine-1-phosphate. The protein is Phosphoglucosamine mutase of Rhodopseudomonas palustris (strain BisB5).